Reading from the N-terminus, the 611-residue chain is Dihydroxy-acid dehydratase (611 aa).

A Mg(2+)-binding site is contributed by Asp-81. Residue Cys-122 participates in [2Fe-2S] cluster binding. The Mg(2+) site is built by Asp-123 and Lys-124. An N6-carboxylysine modification is found at Lys-124. Cys-195 is a binding site for [2Fe-2S] cluster. Glu-491 serves as a coordination point for Mg(2+). Residue Ser-517 is the Proton acceptor of the active site.

This sequence belongs to the IlvD/Edd family. As to quaternary structure, homodimer. Requires [2Fe-2S] cluster as cofactor. The cofactor is Mg(2+).

The catalysed reaction is (2R)-2,3-dihydroxy-3-methylbutanoate = 3-methyl-2-oxobutanoate + H2O. It catalyses the reaction (2R,3R)-2,3-dihydroxy-3-methylpentanoate = (S)-3-methyl-2-oxopentanoate + H2O. It participates in amino-acid biosynthesis; L-isoleucine biosynthesis; L-isoleucine from 2-oxobutanoate: step 3/4. Its pathway is amino-acid biosynthesis; L-valine biosynthesis; L-valine from pyruvate: step 3/4. Its function is as follows. Functions in the biosynthesis of branched-chain amino acids. Catalyzes the dehydration of (2R,3R)-2,3-dihydroxy-3-methylpentanoate (2,3-dihydroxy-3-methylvalerate) into 2-oxo-3-methylpentanoate (2-oxo-3-methylvalerate) and of (2R)-2,3-dihydroxy-3-methylbutanoate (2,3-dihydroxyisovalerate) into 2-oxo-3-methylbutanoate (2-oxoisovalerate), the penultimate precursor to L-isoleucine and L-valine, respectively. This chain is Dihydroxy-acid dehydratase, found in Brucella anthropi (strain ATCC 49188 / DSM 6882 / CCUG 24695 / JCM 21032 / LMG 3331 / NBRC 15819 / NCTC 12168 / Alc 37) (Ochrobactrum anthropi).